The following is a 161-amino-acid chain: Regulator of ribonuclease activity A (161 aa).

This sequence belongs to the RraA family. In terms of assembly, homotrimer. Binds to both RNA-binding sites in the C-terminal region of Rne and to RhlB.

It is found in the cytoplasm. Functionally, globally modulates RNA abundance by binding to RNase E (Rne) and regulating its endonucleolytic activity. Can modulate Rne action in a substrate-dependent manner by altering the composition of the degradosome. Modulates RNA-binding and helicase activities of the degradosome. This is Regulator of ribonuclease activity A from Enterobacter sp. (strain 638).